A 706-amino-acid polypeptide reads, in one-letter code: Methionine--tRNA ligase (706 aa).

Residues 13 to 23 (PYANGNFHIGH) carry the 'HIGH' region motif. 4 residues coordinate Zn(2+): Cys144, Cys147, Cys157, and Cys160. Residues 341-345 (KMSKS) carry the 'KMSKS' region motif. Position 344 (Lys344) interacts with ATP. A tRNA-binding domain is found at 600–706 (DFAKIDLRIA…PGATPGMRVR (107 aa)).

This sequence belongs to the class-I aminoacyl-tRNA synthetase family. MetG type 1 subfamily. In terms of assembly, homodimer. The cofactor is Zn(2+).

Its subcellular location is the cytoplasm. The enzyme catalyses tRNA(Met) + L-methionine + ATP = L-methionyl-tRNA(Met) + AMP + diphosphate. Its function is as follows. Is required not only for elongation of protein synthesis but also for the initiation of all mRNA translation through initiator tRNA(fMet) aminoacylation. This chain is Methionine--tRNA ligase, found in Paracidovorax citrulli (strain AAC00-1) (Acidovorax citrulli).